A 362-amino-acid chain; its full sequence is Snurportin-1 (362 aa).

M1 carries the N-acetylmethionine modification. Disordered regions lie at residues 1-40 (MEEL…SLEQ) and 69-90 (DWTG…MDVD). Residues 1 to 65 (MEELSQALAG…LDYVNHARRL (65 aa)) form a necessary for interaction with KPNB1 and m3G-cap U1 and U5 snRNP import receptor activity region. The tract at residues 1–160 (MEELSQALAG…NTFPSLLPGG (160 aa)) is necessary for interaction with XPO1. Residues 11–73 (SFSVSQDLNS…RLAEDDWTGM (63 aa)) form the IBB domain. A compositionally biased stretch (polar residues) spans 12–22 (FSVSQDLNSTA). Residues 69-89 (DWTGMESEEEEEKKDDEEMDV) are compositionally biased toward acidic residues. Position 75 is a phosphoserine (S75). The interval 128–130 (GKR) is interaction with m3G-cap structure. Residues 210–330 (LHSKLPEEEG…GIMGKLTPRA (121 aa)) are necessary for binding to the m3G-cap structure. The interval 319–362 (KEGIMGKLTPRASENGHYELEHLSTPKLKSPPQRPNHPESLMEN) is disordered. Residues 332 to 342 (ENGHYELEHLS) are compositionally biased toward basic and acidic residues.

Belongs to the snurportin family. As to quaternary structure, component of an import snRNP complex composed of KPNB1, SNUPN, SMN1 and ZNF259. Component of a nuclear export receptor complex composed of KPNB1, Ran, SNUPN and XPO1. Found in a trimeric export complex with SNUPN, Ran and XPO1. Interacts (via IBB domain) with KPNB1; the interaction is direct. Interacts with DDX20, IPO7, SMN1, SNRPB and XPO1. Interacts directly with XPO1. Its interaction with XPO1 and binding to m3G-cap U snRNPs appears to be mutually exclusive. Can form homomers.

Its subcellular location is the nucleus. The protein resides in the cytoplasm. In terms of biological role, functions as an U snRNP-specific nuclear import adapter. Involved in the trimethylguanosine (m3G)-cap-dependent nuclear import of U snRNPs. Binds specifically to the terminal m3G-cap U snRNAs. The chain is Snurportin-1 (SNUPN) from Bos taurus (Bovine).